The sequence spans 315 residues: Putative glycosyltransferase ORF315 (315 aa).

The protein belongs to the glycosyltransferase group 1 family. Glycosyltransferase 4 subfamily.

The sequence is that of Putative glycosyltransferase ORF315 from Acidianus convivator (ABV).